A 401-amino-acid polypeptide reads, in one-letter code: Exodeoxyribonuclease 7 large subunit (401 aa).

This sequence belongs to the XseA family. As to quaternary structure, heterooligomer composed of large and small subunits.

The protein localises to the cytoplasm. The catalysed reaction is Exonucleolytic cleavage in either 5'- to 3'- or 3'- to 5'-direction to yield nucleoside 5'-phosphates.. In terms of biological role, bidirectionally degrades single-stranded DNA into large acid-insoluble oligonucleotides, which are then degraded further into small acid-soluble oligonucleotides. This Thermoanaerobacter sp. (strain X514) protein is Exodeoxyribonuclease 7 large subunit.